We begin with the raw amino-acid sequence, 350 residues long: Phosphotriesterase-related protein (350 aa).

A divalent metal cation-binding residues include H22, H24, E169, H201, H230, and D298.

It belongs to the metallo-dependent hydrolases superfamily. Phosphotriesterase family. A divalent metal cation is required as a cofactor.

This Drosophila melanogaster (Fruit fly) protein is Phosphotriesterase-related protein.